Here is a 177-residue protein sequence, read N- to C-terminus: Probasin (177 aa).

The N-terminal stretch at 1–17 (MRVILLLLTLDVLGVSS) is a signal peptide. Cys-79 and Cys-170 form a disulfide bridge.

Belongs to the calycin superfamily. Lipocalin family. As to expression, prostatic epithelial cells.

It is found in the nucleus. The protein localises to the secreted. The polypeptide is Probasin (Pbsn) (Rattus norvegicus (Rat)).